Reading from the N-terminus, the 135-residue chain is Mini-ribonuclease 3 (135 aa).

Residue Asp-19 is part of the active site.

It belongs to the MrnC RNase family. As to quaternary structure, homodimer. Mg(2+) serves as cofactor.

The protein resides in the cytoplasm. Its function is as follows. Involved in correct processing of both the 5' and 3' ends of 23S rRNA precursor. Processes 30S rRNA precursor transcript even in absence of ribonuclease 3 (Rnc); Rnc processes 30S rRNA into smaller rRNA precursors. The polypeptide is Mini-ribonuclease 3 (Gloeobacter violaceus (strain ATCC 29082 / PCC 7421)).